A 420-amino-acid polypeptide reads, in one-letter code: Glucose-1-phosphate adenylyltransferase (420 aa).

Residues Tyr-107, Gly-172, 187 to 188, and Ser-205 each bind alpha-D-glucose 1-phosphate; that span reads EK.

It belongs to the bacterial/plant glucose-1-phosphate adenylyltransferase family. In terms of assembly, homotetramer.

It catalyses the reaction alpha-D-glucose 1-phosphate + ATP + H(+) = ADP-alpha-D-glucose + diphosphate. It participates in glycan biosynthesis; glycogen biosynthesis. Its function is as follows. Involved in the biosynthesis of ADP-glucose, a building block required for the elongation reactions to produce glycogen. Catalyzes the reaction between ATP and alpha-D-glucose 1-phosphate (G1P) to produce pyrophosphate and ADP-Glc. This is Glucose-1-phosphate adenylyltransferase from Rhodopseudomonas palustris (strain HaA2).